A 241-amino-acid chain; its full sequence is Proteasome subunit beta type-1 (241 aa).

Met1 is modified (N-acetylmethionine). The propeptide occupies 1 to 28 (MLSSVAAYSGAGRDLAMEPHSSVGPLQL). O-linked (GlcNAc) serine glycosylation occurs at Ser58. Phosphoserine occurs at positions 62 and 68. The residue at position 150 (Tyr150) is a Phosphotyrosine. Ser162 is modified (phosphoserine). The residue at position 204 (Lys204) is an N6-acetyllysine. Ser209 is a glycosylation site (O-linked (GlcNAc) serine).

The protein belongs to the peptidase T1B family. In terms of assembly, the 26S proteasome consists of a 20S proteasome core and two 19S regulatory subunits. The 20S proteasome core is a barrel-shaped complex made of 28 subunits that are arranged in four stacked rings. The two outer rings are each formed by seven alpha subunits, and the two inner rings are formed by seven beta subunits. The proteolytic activity is exerted by three beta-subunits PSMB5, PSMB6 and PSMB7. Interacts with SERPINB2. Interacts with RFPL4A.

It localises to the cytoplasm. It is found in the nucleus. In terms of biological role, non-catalytic component of the 20S core proteasome complex involved in the proteolytic degradation of most intracellular proteins. This complex plays numerous essential roles within the cell by associating with different regulatory particles. Associated with two 19S regulatory particles, forms the 26S proteasome and thus participates in the ATP-dependent degradation of ubiquitinated proteins. The 26S proteasome plays a key role in the maintenance of protein homeostasis by removing misfolded or damaged proteins that could impair cellular functions, and by removing proteins whose functions are no longer required. Associated with the PA200 or PA28, the 20S proteasome mediates ubiquitin-independent protein degradation. This type of proteolysis is required in several pathways including spermatogenesis (20S-PA200 complex) or generation of a subset of MHC class I-presented antigenic peptides (20S-PA28 complex). This Bos taurus (Bovine) protein is Proteasome subunit beta type-1 (PSMB1).